We begin with the raw amino-acid sequence, 217 residues long: Guanylate kinase (217 aa).

The segment covering 1 to 10 (MAVSSTTLSS) has biased composition (low complexity). The segment at 1–30 (MAVSSTTLSSPTPPECLQQQEAPRPPATRG) is disordered. One can recognise a Guanylate kinase-like domain in the interval 30–208 (GRLVVLTGPS…ALQELEALLY (179 aa)). Residue 37–44 (GPSGVGKG) coordinates ATP.

It belongs to the guanylate kinase family.

The protein localises to the cytoplasm. The enzyme catalyses GMP + ATP = GDP + ADP. It carries out the reaction dZMP + ATP = dZDP + ADP. The protein operates within purine metabolism. Essential for recycling GMP and indirectly, cGMP. Functionally, (Microbial infection) Catalyzes the phosphorylation of dZMP to dZDP, when the bacterium is infected by a phage that produces the substrate for the synthesis of dZTP (2- amino-2'-deoxyadenosine 5'-triphosphate), which is then used by the phage as a DNA polymerase substrate. The sequence is that of Guanylate kinase from Synechococcus sp. (strain JA-3-3Ab) (Cyanobacteria bacterium Yellowstone A-Prime).